The primary structure comprises 177 residues: Large ribosomal subunit protein uL6 (177 aa).

It belongs to the universal ribosomal protein uL6 family. Part of the 50S ribosomal subunit.

Its function is as follows. This protein binds to the 23S rRNA, and is important in its secondary structure. It is located near the subunit interface in the base of the L7/L12 stalk, and near the tRNA binding site of the peptidyltransferase center. In Shewanella baltica (strain OS223), this protein is Large ribosomal subunit protein uL6.